The primary structure comprises 243 residues: Pyridoxine 5'-phosphate synthase (243 aa).

Asn9 provides a ligand contact to 3-amino-2-oxopropyl phosphate. Residue 11 to 12 participates in 1-deoxy-D-xylulose 5-phosphate binding; sequence DH. Arg20 lines the 3-amino-2-oxopropyl phosphate pocket. The active-site Proton acceptor is His45. 1-deoxy-D-xylulose 5-phosphate contacts are provided by Arg47 and His52. Glu72 acts as the Proton acceptor in catalysis. Thr102 contacts 1-deoxy-D-xylulose 5-phosphate. His193 (proton donor) is an active-site residue. 3-amino-2-oxopropyl phosphate contacts are provided by residues Gly194 and 215-216; that span reads GH.

Belongs to the PNP synthase family. As to quaternary structure, homooctamer; tetramer of dimers.

Its subcellular location is the cytoplasm. The catalysed reaction is 3-amino-2-oxopropyl phosphate + 1-deoxy-D-xylulose 5-phosphate = pyridoxine 5'-phosphate + phosphate + 2 H2O + H(+). Its pathway is cofactor biosynthesis; pyridoxine 5'-phosphate biosynthesis; pyridoxine 5'-phosphate from D-erythrose 4-phosphate: step 5/5. Its function is as follows. Catalyzes the complicated ring closure reaction between the two acyclic compounds 1-deoxy-D-xylulose-5-phosphate (DXP) and 3-amino-2-oxopropyl phosphate (1-amino-acetone-3-phosphate or AAP) to form pyridoxine 5'-phosphate (PNP) and inorganic phosphate. This Pectobacterium atrosepticum (strain SCRI 1043 / ATCC BAA-672) (Erwinia carotovora subsp. atroseptica) protein is Pyridoxine 5'-phosphate synthase.